Consider the following 126-residue polypeptide: Lymphocyte antigen 6 complex locus protein G6c (126 aa).

The signal sequence occupies residues 1–19; it reads MKHLLLLTLSALLYCWVSA. Positions 21 to 112 constitute a UPAR/Ly6 domain; the sequence is TRCHSCYKVP…PRPTPALALI (92 aa). Intrachain disulfides connect cysteine 23/cysteine 48, cysteine 26/cysteine 34, and cysteine 40/cysteine 66. An N-linked (GlcNAc...) (high mannose) asparagine glycan is attached at asparagine 89. An intrachain disulfide couples cysteine 93 to cysteine 98. Serine 100 carries the GPI-anchor amidated serine lipid modification. Residues 101–126 constitute a propeptide, removed in mature form; that stretch reads PAPRPTPALALISLTSLAGLGLWLLH.

As to quaternary structure, monomer. In terms of processing, N-glycosylated. As to expression, highly expressed at the leading edges of cells, on filopodia.

Its subcellular location is the cell membrane. The protein is Lymphocyte antigen 6 complex locus protein G6c (Ly6g6c) of Mus musculus (Mouse).